Here is a 184-residue protein sequence, read N- to C-terminus: ATP synthase subunit b, chloroplastic (184 aa).

Residues L27 to L49 form a helical membrane-spanning segment.

The protein belongs to the ATPase B chain family. In terms of assembly, F-type ATPases have 2 components, F(1) - the catalytic core - and F(0) - the membrane proton channel. F(1) has five subunits: alpha(3), beta(3), gamma(1), delta(1), epsilon(1). F(0) has four main subunits: a(1), b(1), b'(1) and c(10-14). The alpha and beta chains form an alternating ring which encloses part of the gamma chain. F(1) is attached to F(0) by a central stalk formed by the gamma and epsilon chains, while a peripheral stalk is formed by the delta, b and b' chains.

The protein resides in the plastid. Its subcellular location is the chloroplast thylakoid membrane. Functionally, f(1)F(0) ATP synthase produces ATP from ADP in the presence of a proton or sodium gradient. F-type ATPases consist of two structural domains, F(1) containing the extramembraneous catalytic core and F(0) containing the membrane proton channel, linked together by a central stalk and a peripheral stalk. During catalysis, ATP synthesis in the catalytic domain of F(1) is coupled via a rotary mechanism of the central stalk subunits to proton translocation. Component of the F(0) channel, it forms part of the peripheral stalk, linking F(1) to F(0). This Solanum bulbocastanum (Wild potato) protein is ATP synthase subunit b, chloroplastic.